The following is a 313-amino-acid chain: Phosphate import ATP-binding protein PstB 2 (313 aa).

The segment covering 1 to 33 (MSDSINTEPSTDTQTNGERTVETTSPSAETTAG) has biased composition (polar residues). Residues 1 to 40 (MSDSINTEPSTDTQTNGERTVETTSPSAETTAGESEEQVR) are disordered. Residues 54–308 (LSVENLDVWY…PESQRVEDYI (255 aa)) enclose the ABC transporter domain. 86 to 93 (GPSGCGKS) is an ATP binding site.

Belongs to the ABC transporter superfamily. Phosphate importer (TC 3.A.1.7) family. The complex is composed of two ATP-binding proteins (PstB), two transmembrane proteins (PstC and PstA) and a solute-binding protein (PstS).

Its subcellular location is the cell membrane. The enzyme catalyses phosphate(out) + ATP + H2O = ADP + 2 phosphate(in) + H(+). Functionally, part of the ABC transporter complex PstSACB involved in phosphate import. Responsible for energy coupling to the transport system. The polypeptide is Phosphate import ATP-binding protein PstB 2 (Haloarcula marismortui (strain ATCC 43049 / DSM 3752 / JCM 8966 / VKM B-1809) (Halobacterium marismortui)).